The sequence spans 245 residues: MGKRILVQRRGRGGIQFRSKDHLKIAPARYPQDGMDNLMRGVIKEILHEPGRHTPISLVELENGQEFYYIPPEGVYEGQEIQIGKGAEVKTGNVLPLSEIPDGSLVCNVEIRPGDGGKIARRSGTYAIVFSHEGDKVILRLPSRKEKLVDARCRATIGVVAGSGRIEKPFMKAGIKYYHERTHPKRWPVVRGVAMNPVSHPHGGGSHKRPGKPTTVARTAPPGQKVGHIAARKTGRAKRRAATKR.

The segment at 198–245 (VSHPHGGGSHKRPGKPTTVARTAPPGQKVGHIAARKTGRAKRRAATKR) is disordered. Residues 230–245 (AARKTGRAKRRAATKR) are compositionally biased toward basic residues.

It belongs to the universal ribosomal protein uL2 family. In terms of assembly, part of the 50S ribosomal subunit. Forms a bridge to the 30S subunit in the 70S ribosome.

Functionally, one of the primary rRNA binding proteins. Required for association of the 30S and 50S subunits to form the 70S ribosome, for tRNA binding and peptide bond formation. It has been suggested to have peptidyltransferase activity; this is somewhat controversial. Makes several contacts with the 16S rRNA in the 70S ribosome. The protein is Large ribosomal subunit protein uL2 of Korarchaeum cryptofilum (strain OPF8).